The chain runs to 274 residues: MAIHLYKTSTPSTRNRAVDSQVKSNPRNNLIYGQHHCGKGRNARGIITAGHRGGGHKRLYRKIDFRRNEKDIYGRIVTIEYDPNRNAYICLIHYGDGEKRYILHPRGAIIGDTIVSGTEVPIKMGNALPLTDMPLGTAIHNIEITRGKGGQLARAAGAVAKLIAKEGKSATLKLPSGEVRLISKNCSATVGQVGNVGVNQKSLGRAGSKRWLGKRPVVRGVVMNPVDHPHGGGEGRAPIGRKKPTTPWGYPALGRRSRKRNKYSDNLILRRRSK.

A disordered region spans residues 224-274; that stretch reads NPVDHPHGGGEGRAPIGRKKPTTPWGYPALGRRSRKRNKYSDNLILRRRSK.

Belongs to the universal ribosomal protein uL2 family. In terms of assembly, part of the 50S ribosomal subunit.

It is found in the plastid. The protein localises to the chloroplast. This chain is Large ribosomal subunit protein uL2cz/uL2cy (rpl2-A), found in Panax ginseng (Korean ginseng).